The sequence spans 201 residues: Recombination protein RecR (201 aa).

A C4-type zinc finger spans residues 57-72 (CRYCRNLSDAEVCLLC). The region spanning 80–175 (QQICVVETPA…QATRLAYGVP (96 aa)) is the Toprim domain.

It belongs to the RecR family.

In terms of biological role, may play a role in DNA repair. It seems to be involved in an RecBC-independent recombinational process of DNA repair. It may act with RecF and RecO. The polypeptide is Recombination protein RecR (Dichelobacter nodosus (strain VCS1703A)).